The primary structure comprises 318 residues: NADH-quinone oxidoreductase subunit H 2 (318 aa).

A run of 9 helical transmembrane segments spans residues 4-24 (LLIALFSLILLLALLGAAGVF), 77-97 (LAPALAAFPMLAGFGVVAFAP), 106-126 (VGVLFVMGMLALTVWALVLGA), 146-166 (LAYESFLGLSLMGCVLLAGSF), 179-199 (LWFILLQPLGAALFFLAGLAA), 214-234 (LVAGFMTEYSGMSFALFFLGE), 238-258 (ILLVAALFTTLFLGGWAGPIL), 262-282 (IWFGLKVAAISVVFVWLRAAL), and 293-313 (FAWKVALPLALLNLLVTAWIA).

Belongs to the complex I subunit 1 family. In terms of assembly, NDH-1 is composed of 14 different subunits. Subunits NuoA, H, J, K, L, M, N constitute the membrane sector of the complex.

The protein resides in the cell inner membrane. It catalyses the reaction a quinone + NADH + 5 H(+)(in) = a quinol + NAD(+) + 4 H(+)(out). Its function is as follows. NDH-1 shuttles electrons from NADH, via FMN and iron-sulfur (Fe-S) centers, to quinones in the respiratory chain. The immediate electron acceptor for the enzyme in this species is believed to be ubiquinone. Couples the redox reaction to proton translocation (for every two electrons transferred, four hydrogen ions are translocated across the cytoplasmic membrane), and thus conserves the redox energy in a proton gradient. This subunit may bind ubiquinone. The sequence is that of NADH-quinone oxidoreductase subunit H 2 from Cereibacter sphaeroides (strain ATCC 17023 / DSM 158 / JCM 6121 / CCUG 31486 / LMG 2827 / NBRC 12203 / NCIMB 8253 / ATH 2.4.1.) (Rhodobacter sphaeroides).